A 90-amino-acid chain; its full sequence is DNA-binding protein HU (90 aa).

This sequence belongs to the bacterial histone-like protein family. As to quaternary structure, homodimer.

Functionally, histone-like DNA-binding protein which is capable of wrapping DNA to stabilize it, and thus to prevent its denaturation under extreme environmental conditions. The chain is DNA-binding protein HU (hup) from Haemophilus influenzae (strain ATCC 51907 / DSM 11121 / KW20 / Rd).